A 458-amino-acid chain; its full sequence is Transcription factor Atf1 (458 aa).

The bZIP domain maps to 347-410 (EEKRRNFLER…VNLKTLLLAH (64 aa)). A basic motif region spans residues 349–378 (KRRNFLERNRVAALKCRQRKKQWLANLQNK). Residues 389-403 (LTATVTQLREEIVNL) form a leucine-zipper region.

It belongs to the bZIP family.

Its subcellular location is the nucleus. Its function is as follows. Transcription factor that positively regulates vegetative growth, reproduction, and osmotic stress response. The polypeptide is Transcription factor Atf1 (Penicillium expansum (Blue mold rot fungus)).